The sequence spans 457 residues: Aromatic amino acid transport protein AroP (457 aa).

The Cytoplasmic segment spans residues 1–19; the sequence is MMEGQQHGEQLKRGLKNRH. The helical transmembrane segment at 20 to 40 threads the bilayer; it reads IQLIALGGAIGTGLFLGSASV. The Periplasmic portion of the chain corresponds to 41–42; that stretch reads IQ. Residues 43 to 63 form a helical membrane-spanning segment; that stretch reads SAGPGIILGYAIAGFIAFLIM. Residues 64-86 lie on the Cytoplasmic side of the membrane; sequence RQLGEMVVEEPVAGSFSHFAYKY. A helical transmembrane segment spans residues 87–107; the sequence is WGSFAGFASGWNYWVLYVLVA. The Periplasmic portion of the chain corresponds to 108–117; the sequence is MAELTAVGKY. The chain crosses the membrane as a helical span at residues 118-138; it reads IQFWYPEIPTWVSAAVFFVVI. Residues 139 to 155 lie on the Cytoplasmic side of the membrane; that stretch reads NAINLTNVTVFGEMEFW. Residues 156–176 traverse the membrane as a helical segment; it reads FAIIKVIAVVAMIIFGGWLLF. Residues 177 to 201 are Periplasmic-facing; the sequence is SGNGGPQASVSNLWDQGGFLPHGFT. A helical transmembrane segment spans residues 202–222; the sequence is GLVMMMAIIMFSFGGLELVGI. The Cytoplasmic segment spans residues 223 to 240; sequence TAAEADNPEQSIPKATNQ. The helical transmembrane segment at 241–261 threads the bilayer; sequence VIYRILIFYIGSLAVLLSLMP. At 262–271 the chain is on the periplasmic side; it reads WTRVTADTSP. A helical transmembrane segment spans residues 272 to 292; the sequence is FVLIFHELGDTFVANALNIVV. The Cytoplasmic segment spans residues 293 to 333; that stretch reads LTAALSVYNSCVYCNSRMLFGLAQQGNAPKALASVDKRGVP. The helical transmembrane segment at 334-354 threads the bilayer; that stretch reads VNTILVSALVTALCVLINYLA. At 355–358 the chain is on the periplasmic side; sequence PESA. Residues 359–379 form a helical membrane-spanning segment; sequence FGLLMALVVSALVINWAMISL. Residues 380–407 lie on the Cytoplasmic side of the membrane; the sequence is AHMKFRRAKQEQGVVTRFPALLYPLGNW. The helical transmembrane segment at 408-428 threads the bilayer; sequence ICLLFMAVVLVIMLMTPGMAI. Ser-429 is a topological domain (periplasmic). The chain crosses the membrane as a helical span at residues 430–450; sequence VYLIPVWLVVLGIGYLFKEKT. The Cytoplasmic segment spans residues 451–457; that stretch reads AKAVKAH.

Belongs to the amino acid-polyamine-organocation (APC) superfamily. Amino acid transporter (AAT) (TC 2.A.3.1) family.

The protein localises to the cell inner membrane. It carries out the reaction L-phenylalanine(in) + H(+)(in) = L-phenylalanine(out) + H(+)(out). It catalyses the reaction L-tryptophan(in) + H(+)(in) = L-tryptophan(out) + H(+)(out). The catalysed reaction is L-tyrosine(in) + H(+)(in) = L-tyrosine(out) + H(+)(out). In terms of biological role, permease that is involved in the active transport across the cytoplasmic membrane of all three aromatic amino acids, phenylalanine, tyrosine and tryptophan. The protein is Aromatic amino acid transport protein AroP (aroP) of Escherichia coli O157:H7.